The primary structure comprises 371 residues: Protein-tyrosine sulfotransferase 2 (371 aa).

Over 1–8 (MRVTMRRV) the chain is Cytoplasmic. The helical; Signal-anchor for type II membrane protein transmembrane segment at 9 to 25 (LLAVGSVVALMVTLHLG) threads the bilayer. Residues 26–371 (QQVLECQHVL…QVTQNTSSSH (346 aa)) are Lumenal-facing. A 3'-phosphoadenylyl sulfate-binding site is contributed by 76-80 (RSGTT). Cysteines 94 and 154 form a disulfide. E97 serves as the catalytic Proton donor/acceptor. The interaction with peptide substrate stretch occupies residues 99-103 (RIIPR). 3'-phosphoadenylyl sulfate is bound by residues R181, S189, and R193. C223 and C231 are oxidised to a cystine. Residues Y236, 283–292 (STDQVIKPVN), and K298 each bind 3'-phosphoadenylyl sulfate. 2 N-linked (GlcNAc...) asparagine glycosylation sites follow: N341 and N366.

The protein belongs to the protein sulfotransferase family.

The protein localises to the golgi apparatus membrane. The enzyme catalyses L-tyrosyl-[protein] + 3'-phosphoadenylyl sulfate = O-sulfo-L-tyrosine-[protein] + adenosine 3',5'-bisphosphate + H(+). Its function is as follows. Catalyzes the O-sulfation of tyrosine residues within acidic motifs of polypeptides, using 3'-phosphoadenylyl sulfate (PAPS) as cosubstrate. The polypeptide is Protein-tyrosine sulfotransferase 2 (TPST2) (Gallus gallus (Chicken)).